The chain runs to 390 residues: Lipid-A-disaccharide synthase (390 aa).

It belongs to the LpxB family.

It catalyses the reaction a lipid X + a UDP-2-N,3-O-bis[(3R)-3-hydroxyacyl]-alpha-D-glucosamine = a lipid A disaccharide + UDP + H(+). It participates in bacterial outer membrane biogenesis; LPS lipid A biosynthesis. Condensation of UDP-2,3-diacylglucosamine and 2,3-diacylglucosamine-1-phosphate to form lipid A disaccharide, a precursor of lipid A, a phosphorylated glycolipid that anchors the lipopolysaccharide to the outer membrane of the cell. The sequence is that of Lipid-A-disaccharide synthase from Neisseria gonorrhoeae (strain ATCC 700825 / FA 1090).